A 478-amino-acid chain; its full sequence is Methionine aminopeptidase 2 (478 aa).

Residues 1–122 (MAGVEEVAAS…TDPPSVPICD (122 aa)) are disordered. At Ala2 the chain carries N-acetylalanine. Basic residues predominate over residues 36–46 (KKKRRKKKKSK). Ser45 is modified (phosphoserine). Residues 55–79 (EPDKESGASVDEVARQLERSALEDK) show a composition bias toward basic and acidic residues. A phosphoserine; alternate mark is found at Ser60 and Ser63. O-linked (GlcNAc) serine; alternate glycans are attached at residues Ser60 and Ser63. The residue at position 74 (Ser74) is a Phosphoserine. Over residues 80 to 92 (ERDEDDEDGDGDG) the composition is skewed to acidic residues. A compositionally biased stretch (basic residues) spans 97–109 (GKKKKKKKKKRGP). A substrate-binding site is contributed by His231. The a divalent metal cation site is built by Asp251, Asp262, and His331. His339 lines the substrate pocket. 2 residues coordinate a divalent metal cation: Glu364 and Glu459.

This sequence belongs to the peptidase M24A family. Methionine aminopeptidase eukaryotic type 2 subfamily. As to quaternary structure, interacts strongly with the eIF-2 gamma-subunit EIF2S3. Binds EIF2S1 at low magnesium concentrations. Requires Co(2+) as cofactor. Zn(2+) serves as cofactor. It depends on Mn(2+) as a cofactor. Fe(2+) is required as a cofactor. Contains approximately 12 O-linked N-acetylglucosamine (GlcNAc) residues. O-glycosylation is required for EIF2S1 binding.

It localises to the cytoplasm. It catalyses the reaction Release of N-terminal amino acids, preferentially methionine, from peptides and arylamides.. In terms of biological role, cotranslationally removes the N-terminal methionine from nascent proteins. The N-terminal methionine is often cleaved when the second residue in the primary sequence is small and uncharged (Met-Ala-, Cys, Gly, Pro, Ser, Thr, or Val). The catalytic activity of human METAP2 toward Met-Val peptides is consistently two orders of magnitude higher than that of METAP1, suggesting that it is responsible for processing proteins containing N-terminal Met-Val and Met-Thr sequences in vivo. Functionally, protects eukaryotic initiation factor EIF2S1 from translation-inhibiting phosphorylation by inhibitory kinases such as EIF2AK2/PKR and EIF2AK1/HCR. Plays a critical role in the regulation of protein synthesis. The polypeptide is Methionine aminopeptidase 2 (Homo sapiens (Human)).